Here is a 519-residue protein sequence, read N- to C-terminus: Cytochrome P450 52E2 (519 aa).

2 consecutive transmembrane segments (helical) span residues 10–30 (MLGGISLSFLLASQAIYFYFI) and 44–64 (PIFFSFPLGIPDLIRLVNAWF). Cysteine 461 is a binding site for heme.

It belongs to the cytochrome P450 family. Heme serves as cofactor.

It is found in the membrane. In terms of biological role, together with an NADPH cytochrome P450 the enzyme system catalyzes the terminal hydroxylation as the first step in the assimilation of alkanes and fatty acids. The polypeptide is Cytochrome P450 52E2 (CYP52E2) (Candida apicola (Yeast)).